A 70-amino-acid chain; its full sequence is Large ribosomal subunit protein bL31 (70 aa).

Positions 16, 18, 37, and 40 each coordinate Zn(2+).

The protein belongs to the bacterial ribosomal protein bL31 family. Type A subfamily. As to quaternary structure, part of the 50S ribosomal subunit. The cofactor is Zn(2+).

Functionally, binds the 23S rRNA. The sequence is that of Large ribosomal subunit protein bL31 from Proteus mirabilis (strain HI4320).